A 32-amino-acid polypeptide reads, in one-letter code: Dermatoxin-J3 (32 aa).

Glutamine 32 carries the post-translational modification Glutamine amide.

Expressed by the skin glands.

Its subcellular location is the secreted. Its function is as follows. Antimicrobial peptide. The sequence is that of Dermatoxin-J3 from Phasmahyla jandaia (Jandaia leaf frog).